Here is a 473-residue protein sequence, read N- to C-terminus: Cysteine--tRNA ligase (473 aa).

Cys30 provides a ligand contact to Zn(2+). The short motif at 32-42 is the 'HIGH' region element; sequence MTVYDYCHIGH. Residues Cys213, His238, and Glu242 each contribute to the Zn(2+) site. A 'KMSKS' region motif is present at residues 270-274; that stretch reads KMSKS. An ATP-binding site is contributed by Lys273.

This sequence belongs to the class-I aminoacyl-tRNA synthetase family. In terms of assembly, monomer. Requires Zn(2+) as cofactor.

The protein resides in the cytoplasm. It carries out the reaction tRNA(Cys) + L-cysteine + ATP = L-cysteinyl-tRNA(Cys) + AMP + diphosphate. The sequence is that of Cysteine--tRNA ligase from Acinetobacter baumannii (strain ACICU).